The sequence spans 353 residues: UPF0283 membrane protein YcjF (353 aa).

A run of 3 helical transmembrane segments spans residues 70-90, 100-120, and 213-233; these read MVMG…VQWT, VALG…GSVV, and ESTL…FIAW.

It belongs to the UPF0283 family.

The protein localises to the cell inner membrane. This is UPF0283 membrane protein YcjF from Escherichia fergusonii (strain ATCC 35469 / DSM 13698 / CCUG 18766 / IAM 14443 / JCM 21226 / LMG 7866 / NBRC 102419 / NCTC 12128 / CDC 0568-73).